The sequence spans 508 residues: UDP-N-acetylmuramoyl-L-alanyl-D-glutamate--2,6-diaminopimelate ligase (508 aa).

S43 is a UDP-N-acetyl-alpha-D-muramoyl-L-alanyl-D-glutamate binding site. Position 124-130 (124-130) interacts with ATP; sequence GTNGKTT. UDP-N-acetyl-alpha-D-muramoyl-L-alanyl-D-glutamate contacts are provided by residues 166–167, S193, and R201; that span reads TT. K233 carries the post-translational modification N6-carboxylysine. Residues R404, 428–431, G478, and E482 each bind meso-2,6-diaminopimelate; that span reads DNPR. The short motif at 428–431 is the Meso-diaminopimelate recognition motif element; the sequence is DNPR.

It belongs to the MurCDEF family. MurE subfamily. Mg(2+) serves as cofactor. In terms of processing, carboxylation is probably crucial for Mg(2+) binding and, consequently, for the gamma-phosphate positioning of ATP.

The protein localises to the cytoplasm. The catalysed reaction is UDP-N-acetyl-alpha-D-muramoyl-L-alanyl-D-glutamate + meso-2,6-diaminopimelate + ATP = UDP-N-acetyl-alpha-D-muramoyl-L-alanyl-gamma-D-glutamyl-meso-2,6-diaminopimelate + ADP + phosphate + H(+). It functions in the pathway cell wall biogenesis; peptidoglycan biosynthesis. Functionally, catalyzes the addition of meso-diaminopimelic acid to the nucleotide precursor UDP-N-acetylmuramoyl-L-alanyl-D-glutamate (UMAG) in the biosynthesis of bacterial cell-wall peptidoglycan. The chain is UDP-N-acetylmuramoyl-L-alanyl-D-glutamate--2,6-diaminopimelate ligase from Chlorobaculum tepidum (strain ATCC 49652 / DSM 12025 / NBRC 103806 / TLS) (Chlorobium tepidum).